The chain runs to 522 residues: Cytochrome P450 4F4 (522 aa).

The next 2 membrane-spanning stretches (helical) occupy residues 15–35 (TSLPWLLLLLIGASWLLVRVL) and 87–107 (GFMTWLGPILPIITLCHPDVI). 2 residues coordinate heme: glutamate 328 and cysteine 468.

The protein belongs to the cytochrome P450 family. The cofactor is heme. In terms of tissue distribution, expressed in hepatocytes. High expression in liver and kidney. Lower expression in brain.

Its subcellular location is the endoplasmic reticulum membrane. It localises to the microsome membrane. The enzyme catalyses (5Z,8Z,11Z,14Z)-eicosatetraenoate + reduced [NADPH--hemoprotein reductase] + O2 = 20-hydroxy-(5Z,8Z,11Z,14Z)-eicosatetraenoate + oxidized [NADPH--hemoprotein reductase] + H2O + H(+). It carries out the reaction leukotriene B4 + reduced [NADPH--hemoprotein reductase] + O2 = 20-hydroxy-leukotriene B4 + oxidized [NADPH--hemoprotein reductase] + H2O + H(+). The catalysed reaction is 6-trans-leukotriene B4 + reduced [NADPH--hemoprotein reductase] + O2 = 20-hydroxy-6-trans-leukotriene B4 + oxidized [NADPH--hemoprotein reductase] + H2O + H(+). It catalyses the reaction prostaglandin A1 + reduced [NADPH--hemoprotein reductase] + O2 = 20-hydroxy prostaglandin A1 + oxidized [NADPH--hemoprotein reductase] + H2O + H(+). The enzyme catalyses prostaglandin E1 + reduced [NADPH--hemoprotein reductase] + O2 = 20-hydroxy prostaglandin E1 + oxidized [NADPH--hemoprotein reductase] + H2O + H(+). Functionally, a cytochrome P450 monooxygenase involved in the metabolism of arachidonic acid and its oxygenated derivatives. Mechanistically, uses molecular oxygen inserting one oxygen atom into a substrate, and reducing the second into a water molecule, with two electrons provided by NADPH via cytochrome P450 reductase (CPR; NADPH-ferrihemoprotein reductase). Participates in the conversion of arachidonic acid to omega-hydroxyeicosatetraenoic acid (20-HETE), a signaling molecule acting both as vasoconstrictive and natriuretic with overall effect on arterial blood pressure. Hydroxylates the terminal carbon (omega-hydroxylation) of inflammatory lipid mediators, including prostaglandin (PG) A1, PGE1 and leukotriene B4 (LTB4), and may play a role in inactivation of these oxylipins during the resolution of inflammation. In Rattus norvegicus (Rat), this protein is Cytochrome P450 4F4.